A 187-amino-acid chain; its full sequence is NADH-quinone oxidoreductase subunit B (187 aa).

The [4Fe-4S] cluster site is built by Cys-55, Cys-56, Cys-121, and Cys-150.

It belongs to the complex I 20 kDa subunit family. NDH-1 is composed of 14 different subunits. Subunits NuoB, C, D, E, F, and G constitute the peripheral sector of the complex. It depends on [4Fe-4S] cluster as a cofactor.

It is found in the cell inner membrane. The enzyme catalyses a quinone + NADH + 5 H(+)(in) = a quinol + NAD(+) + 4 H(+)(out). Functionally, NDH-1 shuttles electrons from NADH, via FMN and iron-sulfur (Fe-S) centers, to quinones in the respiratory chain. The immediate electron acceptor for the enzyme in this species is believed to be ubiquinone. Couples the redox reaction to proton translocation (for every two electrons transferred, four hydrogen ions are translocated across the cytoplasmic membrane), and thus conserves the redox energy in a proton gradient. In Bdellovibrio bacteriovorus (strain ATCC 15356 / DSM 50701 / NCIMB 9529 / HD100), this protein is NADH-quinone oxidoreductase subunit B.